Reading from the N-terminus, the 243-residue chain is Cytochrome c1, heme protein (243 aa).

Over 1-201 the chain is Mitochondrial intermembrane; that stretch reads GVDSHPPALP…CSNPWWDERK (201 aa). The region spanning 5-194 is the Cytochrome c domain; the sequence is HPPALPWPHF…VTCFLEWCSN (190 aa). Positions 39, 40, and 159 each coordinate heme. The chain crosses the membrane as a helical span at residues 202–221; the sequence is LLGYKTIATLAVIAVSSGYY. Topologically, residues 222–243 are mitochondrial matrix; it reads NRFLSGLWRSRRLAFRPFNYSK.

The protein belongs to the cytochrome c family. In terms of assembly, component of the ubiquinol-cytochrome c oxidoreductase (cytochrome b-c1 complex, complex III, CIII), a multisubunit enzyme composed of 3 respiratory subunits cytochrome b, cytochrome c1 and Rieske protein, 2 core protein subunits, and additional low-molecular weight protein subunits. The complex exists as an obligatory dimer and forms supercomplexes (SCs) in the inner mitochondrial membrane with cytochrome c oxidase (complex IV, CIV). Heme serves as cofactor.

It is found in the mitochondrion inner membrane. It carries out the reaction a quinol + 2 Fe(III)-[cytochrome c](out) = a quinone + 2 Fe(II)-[cytochrome c](out) + 2 H(+)(out). Its function is as follows. Component of the ubiquinol-cytochrome c oxidoreductase, a multisubunit transmembrane complex that is part of the mitochondrial electron transport chain which drives oxidative phosphorylation. The respiratory chain contains 3 multisubunit complexes succinate dehydrogenase (complex II, CII), ubiquinol-cytochrome c oxidoreductase (cytochrome b-c1 complex, complex III, CIII) and cytochrome c oxidase (complex IV, CIV), that cooperate to transfer electrons derived from NADH and succinate to molecular oxygen, creating an electrochemical gradient over the inner membrane that drives transmembrane transport and the ATP synthase. The cytochrome b-c1 complex catalyzes electron transfer from ubiquinol to cytochrome c, linking this redox reaction to translocation of protons across the mitochondrial inner membrane, with protons being carried across the membrane as hydrogens on the quinol. In the process called Q cycle, 2 protons are consumed from the matrix, 4 protons are released into the intermembrane space and 2 electrons are passed to cytochrome c. Cytochrome c1 is a catalytic core subunit containing a c-type heme. It transfers electrons from the [2Fe-2S] iron-sulfur cluster of the Rieske protein to cytochrome c. The polypeptide is Cytochrome c1, heme protein (Euglena gracilis).